A 78-amino-acid chain; its full sequence is Large ribosomal subunit protein bL28 (78 aa).

The tract at residues 1–21 (MSKVCQVTGKRPITGHNVSHA) is disordered.

This sequence belongs to the bacterial ribosomal protein bL28 family.

The chain is Large ribosomal subunit protein bL28 from Cellvibrio japonicus (strain Ueda107) (Pseudomonas fluorescens subsp. cellulosa).